The primary structure comprises 780 residues: ATP-dependent 6-phosphofructokinase, liver type (780 aa).

N-acetylalanine is present on Ala2. The tract at residues 2 to 390 is N-terminal catalytic PFK domain 1; it reads ASVDLEKLRT…NWNIYKLLSH (389 aa). ATP contacts are provided by residues Gly25, 88–89, and 118–121; these read RC and GDGS. Residue Asp119 participates in Mg(2+) binding. Substrate-binding positions include 164–166, Arg201, 208–210, Glu264, Arg292, and 298–301; these read SID, MGR, and HVQR. Asp166 (proton acceptor) is an active-site residue. Ser377 is subject to Phosphoserine. Positions 391-400 are interdomain linker; sequence QKISKEKTNF. A C-terminal regulatory PFK domain 2 region spans residues 401–780; that stretch reads SLAILNVGAP…RRTLSIETGF (380 aa). Beta-D-fructose 2,6-bisphosphate is bound by residues Arg470, 527-531, Arg565, 572-574, and Glu628; these read TISNN and MGG. Ser529 carries an O-linked (GlcNAc) serine glycan. Position 640 is a phosphotyrosine (Tyr640). Beta-D-fructose 2,6-bisphosphate-binding positions include Arg654, 660 to 663, and Arg734; that span reads HLQQ. Position 775 is a phosphoserine (Ser775).

This sequence belongs to the phosphofructokinase type A (PFKA) family. ATP-dependent PFK group I subfamily. Eukaryotic two domain clade 'E' sub-subfamily. In terms of assembly, homo- and heterotetramers. Phosphofructokinase (PFK) enzyme functions as a tetramer composed of different combinations of 3 types of subunits, called PFKM (M), PFKL (L) and PFKP (P). The composition of the PFK tetramer differs according to the tissue type it is present in. The kinetic and regulatory properties of the tetrameric enzyme are dependent on the subunit composition, hence can vary across tissues. The cofactor is Mg(2+). Post-translationally, glcNAcylation at Ser-529 by OGT decreases enzyme activity, leading to redirect glucose flux through the oxidative pentose phosphate pathway. Glycosylation is stimulated by both hypoxia and glucose deprivation.

Its subcellular location is the cytoplasm. It carries out the reaction beta-D-fructose 6-phosphate + ATP = beta-D-fructose 1,6-bisphosphate + ADP + H(+). It functions in the pathway carbohydrate degradation; glycolysis; D-glyceraldehyde 3-phosphate and glycerone phosphate from D-glucose: step 3/4. Allosterically activated by ADP, AMP, or fructose 2,6-bisphosphate, and allosterically inhibited by ATP or citrate. GlcNAcylation by OGT overcomes allosteric regulation. Functionally, catalyzes the phosphorylation of D-fructose 6-phosphate to fructose 1,6-bisphosphate by ATP, the first committing step of glycolysis. Negatively regulates the phagocyte oxidative burst in response to bacterial infection by controlling cellular NADPH biosynthesis and NADPH oxidase-derived reactive oxygen species. Upon macrophage activation, drives the metabolic switch toward glycolysis, thus preventing glucose turnover that produces NADPH via pentose phosphate pathway. The polypeptide is ATP-dependent 6-phosphofructokinase, liver type (PFKL) (Bos taurus (Bovine)).